Reading from the N-terminus, the 455-residue chain is Proline--tRNA ligase (455 aa).

Residues T101, E103, and R132 each coordinate L-proline. R132, E134, Q216, and T219 together coordinate ATP. H221 serves as a coordination point for L-proline. The ATP site is built by S253 and R255. The segment at 329–359 (EIKGVPLRIEVGPKDIENKKITLFRRDTMEK) is interaction with tRNA.

This sequence belongs to the class-II aminoacyl-tRNA synthetase family. ProS type 3 subfamily. In terms of assembly, homodimer. The dimer is functionally asymmetric: only one of the two active sites at a time is able to form prolyl-adenylate, and only one tRNA molecule binds per dimer.

Its subcellular location is the cytoplasm. The enzyme catalyses tRNA(Pro) + L-proline + ATP = L-prolyl-tRNA(Pro) + AMP + diphosphate. With respect to regulation, inhibited by high concentrations of prolinamide. Functionally, catalyzes the attachment of proline to tRNA(Pro) in a two-step reaction: proline is first activated by ATP to form Pro-AMP and then transferred to the acceptor end of tRNA(Pro). Can inadvertently accommodate and process non-cognate amino acids such as cysteine and alanine. The chain is Proline--tRNA ligase (proS) from Methanocaldococcus jannaschii (strain ATCC 43067 / DSM 2661 / JAL-1 / JCM 10045 / NBRC 100440) (Methanococcus jannaschii).